A 215-amino-acid chain; its full sequence is Pyridoxine/pyridoxamine 5'-phosphate oxidase (215 aa).

Residues 9–12 (RRDY) and Lys69 contribute to the substrate site. Residues 64–69 (RVLLLK), 79–80 (FS), Lys86, and Gln108 each bind FMN. Residues Tyr126, Arg130, and Ser134 each contribute to the substrate site. FMN contacts are provided by residues 143 to 144 (QS) and Trp188. Position 194–196 (194–196 (RLH)) interacts with substrate. FMN is bound at residue Arg198.

It belongs to the pyridoxamine 5'-phosphate oxidase family. As to quaternary structure, homodimer. FMN serves as cofactor.

It carries out the reaction pyridoxamine 5'-phosphate + O2 + H2O = pyridoxal 5'-phosphate + H2O2 + NH4(+). The enzyme catalyses pyridoxine 5'-phosphate + O2 = pyridoxal 5'-phosphate + H2O2. The protein operates within cofactor metabolism; pyridoxal 5'-phosphate salvage; pyridoxal 5'-phosphate from pyridoxamine 5'-phosphate: step 1/1. It functions in the pathway cofactor metabolism; pyridoxal 5'-phosphate salvage; pyridoxal 5'-phosphate from pyridoxine 5'-phosphate: step 1/1. Catalyzes the oxidation of either pyridoxine 5'-phosphate (PNP) or pyridoxamine 5'-phosphate (PMP) into pyridoxal 5'-phosphate (PLP). The polypeptide is Pyridoxine/pyridoxamine 5'-phosphate oxidase (Ectopseudomonas mendocina (strain ymp) (Pseudomonas mendocina)).